Reading from the N-terminus, the 535-residue chain is uncharacterized protein (535 aa).

Disordered regions lie at residues 1–58 (MSMK…PRGP), 211–254 (EPPK…PPCI), 313–353 (RRVA…EQVK), 376–416 (RPDK…DQRL), 421–440 (QGLDSGAMDDDTYNPYDAAW), and 508–535 (SLFEHTKEKKRGGDGGDSRGESKRSRRD). The segment covering 22 to 34 (IRRDPWFGGRDNE) has biased composition (basic and acidic residues). The segment at 179–342 (AQYIRYTPSQ…KARQERSAMR (164 aa)) is SNW. Residues 376-393 (RPDKADKLRKERERDISE) are compositionally biased toward basic and acidic residues. Basic and acidic residues predominate over residues 511-535 (EHTKEKKRGGDGGDSRGESKRSRRD).

The protein belongs to the SNW family.

This is an uncharacterized protein from Caenorhabditis elegans.